A 591-amino-acid polypeptide reads, in one-letter code: Serine/threonine-protein phosphatase PP2A 65 kDa regulatory subunit (591 aa).

An N-acetylalanine modification is found at A2. HEAT repeat units follow at residues 10 to 48 (DSLY…GEER), 49 to 86 (TRSE…GGPE), 87 to 125 (FAMY…SAQD), 126 to 163 (LEIH…VTQP), 164 to 202 (VKAE…ETEY), 203 to 241 (LKSD…PQDD), 242 to 280 (VEHL…GPEI), 281 to 323 (TRVD…QVQI), 324 to 362 (ILSS…GAYQ), 363 to 401 (TVEQ…GIQQ), 402 to 440 (LSQS…GQEF), 441 to 479 (FDQK…GAPW), 480 to 518 (AEQA…GTDI), 519 to 557 (TTKL…EASV), and 558 to 591 (IDAQ…IAAA).

Belongs to the phosphatase 2A regulatory subunit A family. PP2A exists in several trimeric forms, all of which consist of a core composed of a catalytic subunit associated with a 65 kDa regulatory subunit (PR65) (subunit A). The core complex associates with a third, variable subunit (subunit B), which confers distinct properties to the holoenzyme. Interacts with the inorganic phosphate transporter PXo (CG10483). Component of the Integrator-PP2A (INTAC) complex, composed of the Integrator core complex and protein phosphatase 2A subunits mts/PP2A and Pp2A-29B. Expression varies in tissues throughout development. Highly distributed expression in early embryos. In late embryonal development, found at high levels in nervous system and gonads. In third instar larvae, found in brain, imaginal disks and salivary glands.

The protein resides in the nucleus. Functionally, the PR65 subunit of protein phosphatase 2A serves as a scaffolding molecule to coordinate the assembly of the catalytic subunit and a variable regulatory B subunit. Key mediator of a quality checkpoint during transcription elongation as part of the Integrator-PP2A (INTAC) complex. The INTAC complex drives premature transcription termination of transcripts that are unfavorably configured for transcriptional elongation: within the INTAC complex, acts as a scaffolding subunit for mts/PP2A, which catalyzes dephosphorylation of the C-terminal domain (CTD) of Pol II subunit POLR2A/RPB1 and Spt5, thereby preventing transcriptional elongation. The polypeptide is Serine/threonine-protein phosphatase PP2A 65 kDa regulatory subunit (Pp2A-29B) (Drosophila melanogaster (Fruit fly)).